A 379-amino-acid polypeptide reads, in one-letter code: Alcohol dehydrogenase 1 (379 aa).

Zn(2+)-binding residues include cysteine 47, threonine 49, histidine 69, cysteine 99, cysteine 102, cysteine 105, cysteine 113, and cysteine 177. Residues threonine 49 and histidine 69 each contribute to the an alcohol site. Threonine 49 serves as a coordination point for NAD(+). Residues 202–207, aspartate 226, arginine 231, threonine 272, valine 295, 295–297, phenylalanine 322, and arginine 372 contribute to the NAD(+) site; these read GLGAVG and VGV.

Belongs to the zinc-containing alcohol dehydrogenase family. As to quaternary structure, homodimer. Zn(2+) is required as a cofactor.

The protein resides in the cytoplasm. The catalysed reaction is a primary alcohol + NAD(+) = an aldehyde + NADH + H(+). It catalyses the reaction a secondary alcohol + NAD(+) = a ketone + NADH + H(+). The polypeptide is Alcohol dehydrogenase 1 (ADH1) (Hordeum vulgare (Barley)).